The sequence spans 212 residues: Transcription antitermination protein NusB (212 aa).

This sequence belongs to the NusB family.

Functionally, involved in transcription antitermination. Required for transcription of ribosomal RNA (rRNA) genes. Binds specifically to the boxA antiterminator sequence of the ribosomal RNA (rrn) operons. This chain is Transcription antitermination protein NusB, found in Gloeothece citriformis (strain PCC 7424) (Cyanothece sp. (strain PCC 7424)).